Here is a 300-residue protein sequence, read N- to C-terminus: Iron-dependent extradiol dioxygenase (300 aa).

VOC domains are found at residues 5–120 (SLAY…AFHG) and 142–270 (GLGH…FGCE). H145 lines the Fe cation pocket. Positions 200, 215, 250, and 256 each coordinate substrate. Position 215 (H215) interacts with Fe cation. E266 serves as a coordination point for Fe cation.

The protein belongs to the extradiol ring-cleavage dioxygenase family. In terms of assembly, homodimer. Fe(2+) is required as a cofactor.

It catalyses the reaction 3,4-dihydroxy-9,10-secoandrosta-1,3,5(10)-triene-9,17-dione + O2 = (1E,2Z)-3-hydroxy-5,9,17-trioxo-4,5:9,10-disecoandrosta-1(10),2-dien-4-oate + H(+). It participates in steroid metabolism; cholesterol metabolism. Catalyzes the meta-cleavage of 3,4-dihydroxy-9,10-seconandrost-1,3,5(10)-triene-9,17-dione (3,4-DHSA) to produce 4,5-9,10-diseco-3-hydroxy-5,9,17-trioxoandrosta-1(10),2-diene-4-oic acid (4,9-DSHA). Also involved in biphenyl and polychlorinated biphenyls (PCBs) degradation. This is Iron-dependent extradiol dioxygenase (hsaC) from Rhodococcus jostii (strain RHA1).